The primary structure comprises 293 residues: Methylsterol monooxygenase 1 (293 aa).

Helical transmembrane passes span 55–75 (LIVH…FQFI) and 100–120 (VLLF…YYFT). One can recognise a Fatty acid hydroxylase domain in the interval 145 to 274 (CAVIEDTWHY…FTWWDRIFGT (130 aa)). The Histidine box-1 signature appears at 157 to 161 (HRLLH). Positions 170-174 (HKVHH) match the Histidine box-2 motif. A helical membrane pass occupies residues 199-219 (FFIGIVLLCDHVILLWAWVTI). The Histidine box-3 signature appears at 249–255 (HHDFHHM).

It belongs to the sterol desaturase family. Requires Fe cation as cofactor. Ubiquitinated by MARCHF6, leading to proteasomal degradation.

The protein localises to the endoplasmic reticulum membrane. The enzyme catalyses 4,4-dimethyl-5alpha-cholest-7-en-3beta-ol + 6 Fe(II)-[cytochrome b5] + 3 O2 + 5 H(+) = 4alpha-carboxy-4beta-methyl-5alpha-cholest-7-ene-3beta-ol + 6 Fe(III)-[cytochrome b5] + 4 H2O. The catalysed reaction is 4,4-dimethyl-5alpha-cholesta-8,24-dien-3beta-ol + 6 Fe(II)-[cytochrome b5] + 3 O2 + 5 H(+) = 4beta-methylzymosterol-4alpha-carboxylate + 6 Fe(III)-[cytochrome b5] + 4 H2O. It catalyses the reaction 4alpha-methylzymosterol + 6 Fe(II)-[cytochrome b5] + 3 O2 + 5 H(+) = 4alpha-carboxyzymosterol + 6 Fe(III)-[cytochrome b5] + 4 H2O. It carries out the reaction 4alpha-methyl-5alpha-cholest-7-en-3beta-ol + 6 Fe(II)-[cytochrome b5] + 3 O2 + 5 H(+) = 4alpha-carboxy-5alpha-cholest-7-en-3beta-ol + 6 Fe(III)-[cytochrome b5] + 4 H2O. The enzyme catalyses 4,4-dimethyl-5alpha-cholest-8-en-3beta-ol + 6 Fe(II)-[cytochrome b5] + 3 O2 + 5 H(+) = 4alpha-carboxy-4beta-methyl-5alpha-cholest-8-en-3beta-ol + 6 Fe(III)-[cytochrome b5] + 4 H2O. The catalysed reaction is 4alpha-methyl-5alpha-cholest-8-en-3beta-ol + 6 Fe(II)-[cytochrome b5] + 3 O2 + 5 H(+) = 4alpha-carboxy-5alpha-cholest-8-ene-3beta-ol + 6 Fe(III)-[cytochrome b5] + 4 H2O. It participates in steroid biosynthesis; zymosterol biosynthesis; zymosterol from lanosterol: step 3/6. It functions in the pathway steroid biosynthesis; cholesterol biosynthesis. Functionally, catalyzes the three-step monooxygenation required for the demethylation of 4,4-dimethyl and 4alpha-methylsterols, which can be subsequently metabolized to cholesterol. This Macaca fascicularis (Crab-eating macaque) protein is Methylsterol monooxygenase 1 (MSMO1).